Reading from the N-terminus, the 373-residue chain is MSKRQLVTQSRRFVIKIGSALLTDNGRGLDQKAMAAWVEQIAALSKKGYEVVLVSSGAVAAGMTRLGWKSRPKAIHEQQAAAAVGQSLLIQAYEQEFQRYSKKIAQVLLDHDDLSSRQRYLNARSTLRTLMNLDVIPIINENDTVVTDEIRFGDNDTLAALVANLIEADILCILTDQKGMFDSDPRQNALAELLFEKPALSPELDNMATSGGALGRGGMISKVRAARLAARSGASTVIVGGKIPDVLPKVANGDMIGTLLYADQQPIAARKRWLAGQLQSRGVVTLDDGAVSVLRDKGKSLLPVGVKAVSGHFTRGDMVVCKDARGAEIARGLVNYNSDDARKIMGQPTTKIETLLGYKDFDELIHRDNLVLS.

Lys16 is an ATP binding site. Residues Ser56, Asp143, and Asn155 each contribute to the substrate site. 175-176 (TD) contributes to the ATP binding site. Positions 281 to 359 (RGVVTLDDGA…TKIETLLGYK (79 aa)) constitute a PUA domain.

It belongs to the glutamate 5-kinase family.

The protein localises to the cytoplasm. The enzyme catalyses L-glutamate + ATP = L-glutamyl 5-phosphate + ADP. Its pathway is amino-acid biosynthesis; L-proline biosynthesis; L-glutamate 5-semialdehyde from L-glutamate: step 1/2. Catalyzes the transfer of a phosphate group to glutamate to form L-glutamate 5-phosphate. The chain is Glutamate 5-kinase from Teredinibacter turnerae (strain ATCC 39867 / T7901).